The chain runs to 446 residues: Nuclear envelope integral membrane protein 1 (446 aa).

The signal sequence occupies residues 1 to 37; it reads MAGFMKYKSVSTTIETVRLKLILTAVLFLFPFSQTSG. 3 N-linked (GlcNAc...) asparagine glycosylation sites follow: asparagine 62, asparagine 118, and asparagine 129. Helical transmembrane passes span 154–174, 181–201, 209–229, 239–259, and 269–289; these read IYLF…DVLS, YSAG…FIVY, PFYM…QLVF, HWHL…AVCY, and SINI…YAGI. Acidic residues predominate over residues 410-431; that stretch reads LFSTDEEDKEEEEDGWETEDDI. The segment at 410–446 is disordered; the sequence is LFSTDEEDKEEEEDGWETEDDIKPEVTSPRMNNTRGK. Asparagine 441 carries an N-linked (GlcNAc...) asparagine glycan.

It belongs to the NEMP family.

The protein localises to the nucleus inner membrane. Functionally, contributes to nuclear envelope stiffness in germ cells. Involved in male and female fertility. Essential for normal erythropoiesis. Required for efficient nuclear envelope opening and enucleation during the late stages of erythroblast maturation. The protein is Nuclear envelope integral membrane protein 1 of Danio rerio (Zebrafish).